A 108-amino-acid polypeptide reads, in one-letter code: ATP-dependent Clp protease adapter protein ClpS (108 aa).

This sequence belongs to the ClpS family. As to quaternary structure, binds to the N-terminal domain of the chaperone ClpA.

In terms of biological role, involved in the modulation of the specificity of the ClpAP-mediated ATP-dependent protein degradation. In Cupriavidus metallidurans (strain ATCC 43123 / DSM 2839 / NBRC 102507 / CH34) (Ralstonia metallidurans), this protein is ATP-dependent Clp protease adapter protein ClpS.